Reading from the N-terminus, the 726-residue chain is Elongation factor 2 (726 aa).

A tr-type G domain is found at D19–P260. Residues A28–T35, D94–H98, and N148–D151 contribute to the GTP site. H602 carries the post-translational modification Diphthamide.

Belongs to the TRAFAC class translation factor GTPase superfamily. Classic translation factor GTPase family. EF-G/EF-2 subfamily.

It is found in the cytoplasm. In terms of biological role, catalyzes the GTP-dependent ribosomal translocation step during translation elongation. During this step, the ribosome changes from the pre-translocational (PRE) to the post-translocational (POST) state as the newly formed A-site-bound peptidyl-tRNA and P-site-bound deacylated tRNA move to the P and E sites, respectively. Catalyzes the coordinated movement of the two tRNA molecules, the mRNA and conformational changes in the ribosome. This Methanocaldococcus jannaschii (strain ATCC 43067 / DSM 2661 / JAL-1 / JCM 10045 / NBRC 100440) (Methanococcus jannaschii) protein is Elongation factor 2 (fusA).